Consider the following 71-residue polypeptide: Large ribosomal subunit protein uL30 (71 aa).

It belongs to the universal ribosomal protein uL30 family. In terms of assembly, part of the 50S ribosomal subunit.

This is Large ribosomal subunit protein uL30 from Borreliella burgdorferi (strain ATCC 35210 / DSM 4680 / CIP 102532 / B31) (Borrelia burgdorferi).